The following is a 143-amino-acid chain: ATP synthase epsilon chain (143 aa).

Belongs to the ATPase epsilon chain family. In terms of assembly, F-type ATPases have 2 components, CF(1) - the catalytic core - and CF(0) - the membrane proton channel. CF(1) has five subunits: alpha(3), beta(3), gamma(1), delta(1), epsilon(1). CF(0) has three main subunits: a, b and c.

Its subcellular location is the cell membrane. In terms of biological role, produces ATP from ADP in the presence of a proton gradient across the membrane. The chain is ATP synthase epsilon chain from Lacticaseibacillus casei (strain BL23) (Lactobacillus casei).